The chain runs to 507 residues: Dolichyl pyrophosphate Man9GlcNAc2 alpha-1,3-glucosyltransferase (507 aa).

Residues 1–3 (MEK) lie on the Cytoplasmic side of the membrane. A helical membrane pass occupies residues 4-24 (WSLMTITVLLALTVRWTVSLG). The Lumenal segment spans residues 25-114 (SYSGAGKPPM…SQSHKLFMRT (90 aa)). An N-linked (GlcNAc...) asparagine glycan is attached at N59. The helical transmembrane segment at 115–135 (TVFVADLLIYIPAVILYCCSL) threads the bilayer. Topologically, residues 136-143 (KETSTKKK) are cytoplasmic. Residues 144–164 (VSSALCILLYPGLILIDHGHF) form a helical membrane-spanning segment. The Lumenal portion of the chain corresponds to 165–168 (QYNS). The helical transmembrane segment at 169–189 (VSLGFALWGVLCLSYDWDLLG) threads the bilayer. The Cytoplasmic segment spans residues 190–226 (SAAFCLALNYKQMELYHSLPFFCYLLGKCFKKGLKGK). The helical transmembrane segment at 227–247 (GLLLLIKLAGTVVASFAVCWL) threads the bilayer. The Lumenal portion of the chain corresponds to 248 to 297 (PFCTDVEQIMQVLRRLFPIDRGLFEDKVANIWCSLSVLIKIKNVVSPQTQ). A helical membrane pass occupies residues 298 to 318 (LKLSFAVTFLSLLPTCIKLTV). The Cytoplasmic portion of the chain corresponds to 319–338 (QPSLRGFKLTLVSCALSFFL). A helical transmembrane segment spans residues 339 to 359 (FSFQVHEKSILLVSVPVCLII). Topologically, residues 360-361 (NE) are lumenal. The chain crosses the membrane as a helical span at residues 362-382 (VPFMATWFLLVSTFSMLPLLL). Over 383 to 387 (KDGLL) the chain is Cytoplasmic. Residues 388–408 (LPYAVTTLAFLSACVASFAIF) traverse the membrane as a helical segment. Residues 409–441 (EKTSAKDLQLKPFSQSLRGYVSWFKLFPKIVRS) are Lumenal-facing. The chain crosses the membrane as a helical span at residues 442-462 (LFLLSVTLMGVLSVMSAAVHP). The Cytoplasmic portion of the chain corresponds to 463-473 (PQRFPDLFPVS). Residues 474-494 (VSSISCLHFLFFLVYFNVIIL) traverse the membrane as a helical segment. At 495–507 (WDSKNSRNQKKVS) the chain is on the lumenal side.

It belongs to the ALG6/ALG8 glucosyltransferase family.

Its subcellular location is the endoplasmic reticulum membrane. It carries out the reaction an alpha-D-Man-(1-&gt;2)-alpha-D-Man-(1-&gt;2)-alpha-D-Man-(1-&gt;3)-[alpha-D-Man-(1-&gt;2)-alpha-D-Man-(1-&gt;3)-[alpha-D-Man-(1-&gt;2)-alpha-D-Man-(1-&gt;6)]-alpha-D-Man-(1-&gt;6)]-beta-D-Man-(1-&gt;4)-beta-D-GlcNAc-(1-&gt;4)-alpha-D-GlcNAc-diphospho-di-trans,poly-cis-dolichol + a di-trans,poly-cis-dolichyl beta-D-glucosyl phosphate = an alpha-D-Glc-(1-&gt;3)-alpha-D-Man-(1-&gt;2)-alpha-D-Man-(1-&gt;2)-alpha-D-Man-(1-&gt;3)-[alpha-D-Man-(1-&gt;2)-alpha-D-Man-(1-&gt;3)-[alpha-D-Man-(1-&gt;2)-alpha-D-Man-(1-&gt;6)]-alpha-D-Man-(1-&gt;6)]-beta-D-Man-(1-&gt;4)-beta-D-GlcNAc-(1-&gt;4)-alpha-D-GlcNAc-diphospho-di-trans,poly-cis-dolichol + a di-trans,poly-cis-dolichyl phosphate + H(+). Its pathway is protein modification; protein glycosylation. Its function is as follows. Dolichyl pyrophosphate Man9GlcNAc2 alpha-1,3-glucosyltransferase that operates in the biosynthetic pathway of dolichol-linked oligosaccharides, the glycan precursors employed in protein asparagine (N)-glycosylation. The assembly of dolichol-linked oligosaccharides begins on the cytosolic side of the endoplasmic reticulum membrane and finishes in its lumen. The sequential addition of sugars to dolichol pyrophosphate produces dolichol-linked oligosaccharides containing fourteen sugars, including two GlcNAcs, nine mannoses and three glucoses. Once assembled, the oligosaccharide is transferred from the lipid to nascent proteins by oligosaccharyltransferases. In the lumen of the endoplasmic reticulum, adds the first glucose residue from dolichyl phosphate glucose (Dol-P-Glc) onto the lipid-linked oligosaccharide intermediate Man(9)GlcNAc(2)-PP-Dol to produce Glc(1)Man(9)GlcNAc(2)-PP-Dol. Glc(1)Man(9)GlcNAc(2)-PP-Dol is a substrate for ALG8, the following enzyme in the biosynthetic pathway. This is Dolichyl pyrophosphate Man9GlcNAc2 alpha-1,3-glucosyltransferase from Gallus gallus (Chicken).